Reading from the N-terminus, the 85-residue chain is Cell division topological specificity factor (85 aa).

It belongs to the MinE family.

Functionally, prevents the cell division inhibition by proteins MinC and MinD at internal division sites while permitting inhibition at polar sites. This ensures cell division at the proper site by restricting the formation of a division septum at the midpoint of the long axis of the cell. The protein is Cell division topological specificity factor of Thioalkalivibrio sulfidiphilus (strain HL-EbGR7).